The sequence spans 694 residues: Elongation factor G (694 aa).

The region spanning 8–287 is the tr-type G domain; that stretch reads EDYRNFGIMA…AVVEFLPAPT (280 aa). Residues 17–24, 86–90, and 140–143 each bind GTP; these read AHIDAGKT, DTPGH, and NKMD.

It belongs to the TRAFAC class translation factor GTPase superfamily. Classic translation factor GTPase family. EF-G/EF-2 subfamily.

Its subcellular location is the cytoplasm. Functionally, catalyzes the GTP-dependent ribosomal translocation step during translation elongation. During this step, the ribosome changes from the pre-translocational (PRE) to the post-translocational (POST) state as the newly formed A-site-bound peptidyl-tRNA and P-site-bound deacylated tRNA move to the P and E sites, respectively. Catalyzes the coordinated movement of the two tRNA molecules, the mRNA and conformational changes in the ribosome. This chain is Elongation factor G, found in Brucella anthropi (strain ATCC 49188 / DSM 6882 / CCUG 24695 / JCM 21032 / LMG 3331 / NBRC 15819 / NCTC 12168 / Alc 37) (Ochrobactrum anthropi).